A 210-amino-acid polypeptide reads, in one-letter code: MTAWVGLTGGIGSGKSAAAQYFADLGVPRIDADAAAHSLTASDGIALPEIRRLFGDTVFDTQGLLRRDILRKEIFASPSRKALLESVMLPLIFSEIKKQQETFTDAVYGIVEIPLLTEKRQFISLIRRVLTISAPLEKRIGRVMARSGLTRGEVADIISHQASESERLLLADDVLLNDGSLKSLREKTMLLHAFYSGIFASKPTQGKHNG.

Residues 4–202 (WVGLTGGIGS…AFYSGIFASK (199 aa)) form the DPCK domain. 12–17 (GSGKSA) is a binding site for ATP.

Belongs to the CoaE family.

Its subcellular location is the cytoplasm. It carries out the reaction 3'-dephospho-CoA + ATP = ADP + CoA + H(+). Its pathway is cofactor biosynthesis; coenzyme A biosynthesis; CoA from (R)-pantothenate: step 5/5. Functionally, catalyzes the phosphorylation of the 3'-hydroxyl group of dephosphocoenzyme A to form coenzyme A. The chain is Dephospho-CoA kinase from Neisseria gonorrhoeae (strain ATCC 700825 / FA 1090).